A 310-amino-acid polypeptide reads, in one-letter code: p-hydroxybenzoic acid efflux pump subunit AaeA (310 aa).

A helical transmembrane segment spans residues 12–32 (AITVVLVILAFIAIFNAWVYY).

This sequence belongs to the membrane fusion protein (MFP) (TC 8.A.1) family.

It localises to the cell inner membrane. Forms an efflux pump with AaeB. This Escherichia coli O7:K1 (strain IAI39 / ExPEC) protein is p-hydroxybenzoic acid efflux pump subunit AaeA.